Reading from the N-terminus, the 118-residue chain is Elicitin (118 aa).

A signal peptide spans 1–20; sequence MNFRALFAATVAALVGSTSA. Cystine bridges form between C23/C91, C47/C76, and C71/C115.

The protein belongs to the elicitin family.

The protein resides in the secreted. In terms of biological role, induces local and distal defense responses (incompatible hypersensitive reaction) in plants from the solanaceae and cruciferae families. Elicits leaf necrosis and causes the accumulation of pathogenesis-related proteins. Might interact with the lipidic molecules of the plasma membrane. This chain is Elicitin (PARA1), found in Phytophthora nicotianae (Potato buckeye rot agent).